Consider the following 369-residue polypeptide: NADH-quinone oxidoreductase subunit H (369 aa).

A run of 8 helical transmembrane segments spans residues 20 to 40, 88 to 108, 133 to 153, 179 to 199, 205 to 225, 267 to 287, 293 to 313, and 328 to 348; these read VLLI…AYLV, ICFL…WAVI, IGVL…IIAG, IGLT…GEIV, MPYW…ISSL, ILIN…PLNI, IPGI…FIWI, and LGWK…SGVL.

The protein belongs to the complex I subunit 1 family. As to quaternary structure, NDH-1 is composed of 14 different subunits. Subunits NuoA, H, J, K, L, M, N constitute the membrane sector of the complex.

It is found in the cell inner membrane. The enzyme catalyses a quinone + NADH + 5 H(+)(in) = a quinol + NAD(+) + 4 H(+)(out). Functionally, NDH-1 shuttles electrons from NADH, via FMN and iron-sulfur (Fe-S) centers, to quinones in the respiratory chain. The immediate electron acceptor for the enzyme in this species is believed to be ubiquinone. Couples the redox reaction to proton translocation (for every two electrons transferred, four hydrogen ions are translocated across the cytoplasmic membrane), and thus conserves the redox energy in a proton gradient. This subunit may bind ubiquinone. The protein is NADH-quinone oxidoreductase subunit H of Ehrlichia canis (strain Jake).